The sequence spans 287 residues: ATP synthase gamma chain (287 aa).

Belongs to the ATPase gamma chain family. F-type ATPases have 2 components, CF(1) - the catalytic core - and CF(0) - the membrane proton channel. CF(1) has five subunits: alpha(3), beta(3), gamma(1), delta(1), epsilon(1). CF(0) has three main subunits: a, b and c.

It localises to the cell inner membrane. Functionally, produces ATP from ADP in the presence of a proton gradient across the membrane. The gamma chain is believed to be important in regulating ATPase activity and the flow of protons through the CF(0) complex. The polypeptide is ATP synthase gamma chain (Xanthomonas oryzae pv. oryzae (strain MAFF 311018)).